The sequence spans 65 residues: MTTKLLFVCLGNICRSPAAEGVFLHLIEQRQLTDQFLVDSAGTGGWHVGNPADRRMQAAARRRGI.

Cys9 (nucleophile) is an active-site residue. The active site involves Arg15.

It belongs to the low molecular weight phosphotyrosine protein phosphatase family.

This is an uncharacterized protein from Synechococcus sp. (strain WH8020).